The following is a 365-amino-acid chain: N5-carboxyaminoimidazole ribonucleotide synthase (365 aa).

ATP contacts are provided by residues arginine 93, lysine 132, 137–143 (GYDGKGQ), 168–171 (EEFV), glutamate 176, histidine 199, and 249–250 (NE). Residues 97–279 (KLFLKKHGFP…QFENLLRAIT (183 aa)) enclose the ATP-grasp domain.

It belongs to the PurK/PurT family. As to quaternary structure, homodimer.

It catalyses the reaction 5-amino-1-(5-phospho-beta-D-ribosyl)imidazole + hydrogencarbonate + ATP = 5-carboxyamino-1-(5-phospho-D-ribosyl)imidazole + ADP + phosphate + 2 H(+). It participates in purine metabolism; IMP biosynthesis via de novo pathway; 5-amino-1-(5-phospho-D-ribosyl)imidazole-4-carboxylate from 5-amino-1-(5-phospho-D-ribosyl)imidazole (N5-CAIR route): step 1/2. Functionally, catalyzes the ATP-dependent conversion of 5-aminoimidazole ribonucleotide (AIR) and HCO(3)(-) to N5-carboxyaminoimidazole ribonucleotide (N5-CAIR). The sequence is that of N5-carboxyaminoimidazole ribonucleotide synthase from Aquifex aeolicus (strain VF5).